The chain runs to 286 residues: Translocon-associated protein subunit alpha (286 aa).

Positions 1 to 23 (MRVLPRLLLLLLLAFPAAVLLRG) are cleaved as a signal peptide. The Lumenal segment spans residues 24 to 207 (GPGGSLVAAQ…EREDGLDGET (184 aa)). Over residues 37–75 (EDEETVEDSIIEDEDDEAEVEEDEPTDLAEDKEEEDVSG) the composition is skewed to acidic residues. The segment at 37–83 (EDEETVEDSIIEDEDDEAEVEEDEPTDLAEDKEEEDVSGEPEASPSA) is disordered. 2 N-linked (GlcNAc...) asparagine glycosylation sites follow: asparagine 136 and asparagine 191. Residues 208–228 (IFMYMFLAGLGLLVVVGLHQL) form a helical membrane-spanning segment. Topologically, residues 229-286 (LESRKRKRPIQKVEMGTSSQNDVDMSWIPQETLNQINKASPRRLPRKRAQKRSVGSDE) are cytoplasmic. Serine 247 is modified (phosphoserine). Threonine 260 bears the Phosphothreonine mark. The disordered stretch occupies residues 261-286 (LNQINKASPRRLPRKRAQKRSVGSDE). Position 268 is a phosphoserine (serine 268). Residues 268–279 (SPRRLPRKRAQK) show a composition bias toward basic residues.

It belongs to the TRAP-alpha family. As to quaternary structure, heterotetramer of TRAP-alpha, TRAP-beta, TRAP-delta and TRAP-gamma. Interacts with palmitoylated calnexin (CALX), the interaction is required for efficient folding of glycosylated proteins. Phosphorylated in its cytoplasmic tail.

The protein localises to the endoplasmic reticulum membrane. TRAP proteins are part of a complex whose function is to bind calcium to the ER membrane and thereby regulate the retention of ER resident proteins. May be involved in the recycling of the translocation apparatus after completion of the translocation process or may function as a membrane-bound chaperone facilitating folding of translocated proteins. The protein is Translocon-associated protein subunit alpha (SSR1) of Canis lupus familiaris (Dog).